The primary structure comprises 616 residues: Proline--tRNA ligase (616 aa).

The protein belongs to the class-II aminoacyl-tRNA synthetase family. ProS type 1 subfamily. As to quaternary structure, homodimer.

Its subcellular location is the cytoplasm. The catalysed reaction is tRNA(Pro) + L-proline + ATP = L-prolyl-tRNA(Pro) + AMP + diphosphate. Functionally, catalyzes the attachment of proline to tRNA(Pro) in a two-step reaction: proline is first activated by ATP to form Pro-AMP and then transferred to the acceptor end of tRNA(Pro). As ProRS can inadvertently accommodate and process non-cognate amino acids such as alanine and cysteine, to avoid such errors it has two additional distinct editing activities against alanine. One activity is designated as 'pretransfer' editing and involves the tRNA(Pro)-independent hydrolysis of activated Ala-AMP. The other activity is designated 'posttransfer' editing and involves deacylation of mischarged Ala-tRNA(Pro). The misacylated Cys-tRNA(Pro) is not edited by ProRS. The polypeptide is Proline--tRNA ligase (Streptococcus sanguinis (strain SK36)).